The following is a 190-amino-acid chain: Lipid A acyltransferase PagP (190 aa).

A signal peptide spans 1-18; the sequence is MKRLISCLTIICALNASA. Catalysis depends on residues histidine 60, aspartate 103, and serine 104.

This sequence belongs to the lipid A palmitoyltransferase family. As to quaternary structure, homodimer.

Its subcellular location is the cell outer membrane. The enzyme catalyses a lipid A + a 1,2-diacyl-sn-glycero-3-phosphocholine = a hepta-acyl lipid A + a 2-acyl-sn-glycero-3-phosphocholine. It catalyses the reaction a lipid IVA + a 1,2-diacyl-sn-glycero-3-phosphocholine = a lipid IVB + a 2-acyl-sn-glycero-3-phosphocholine. The catalysed reaction is a lipid IIA + a 1,2-diacyl-sn-glycero-3-phosphocholine = a lipid IIB + a 2-acyl-sn-glycero-3-phosphocholine. In terms of biological role, transfers a fatty acid residue from the sn-1 position of a phospholipid to the N-linked hydroxyfatty acid chain on the proximal unit of lipid A or its precursors. This is Lipid A acyltransferase PagP from Legionella pneumophila serogroup 1 (strain 2300/99 Alcoy).